The following is a 205-amino-acid chain: Holliday junction branch migration complex subunit RuvA (205 aa).

A domain I region spans residues 1–64 (MIGRLRGVLV…EDAQLLYGFI (64 aa)). The segment at 65–143 (TKQERALFRL…SLMEASAGSE (79 aa)) is domain II. Positions 144–156 (REFVLQSNYSPAP) are flexible linker. The segment at 157 to 205 (TVNSAEEDAISALISLGYKPPQASKSVSAAYKEGMDSETLIKAALKSML) is domain III.

The protein belongs to the RuvA family. In terms of assembly, homotetramer. Forms an RuvA(8)-RuvB(12)-Holliday junction (HJ) complex. HJ DNA is sandwiched between 2 RuvA tetramers; dsDNA enters through RuvA and exits via RuvB. An RuvB hexamer assembles on each DNA strand where it exits the tetramer. Each RuvB hexamer is contacted by two RuvA subunits (via domain III) on 2 adjacent RuvB subunits; this complex drives branch migration. In the full resolvosome a probable DNA-RuvA(4)-RuvB(12)-RuvC(2) complex forms which resolves the HJ.

The protein resides in the cytoplasm. The RuvA-RuvB-RuvC complex processes Holliday junction (HJ) DNA during genetic recombination and DNA repair, while the RuvA-RuvB complex plays an important role in the rescue of blocked DNA replication forks via replication fork reversal (RFR). RuvA specifically binds to HJ cruciform DNA, conferring on it an open structure. The RuvB hexamer acts as an ATP-dependent pump, pulling dsDNA into and through the RuvAB complex. HJ branch migration allows RuvC to scan DNA until it finds its consensus sequence, where it cleaves and resolves the cruciform DNA. This is Holliday junction branch migration complex subunit RuvA from Shewanella baltica (strain OS223).